We begin with the raw amino-acid sequence, 336 residues long: Glyceraldehyde-3-phosphate dehydrogenase (336 aa).

NAD(+) is bound by residues 12–13 (RI), aspartate 34, arginine 78, and threonine 121. D-glyceraldehyde 3-phosphate is bound by residues 151–153 (SCT), threonine 182, arginine 199, 212–213 (TG), and arginine 235. Residue cysteine 152 is the Nucleophile of the active site. Asparagine 316 is a binding site for NAD(+).

Belongs to the glyceraldehyde-3-phosphate dehydrogenase family. In terms of assembly, homotetramer.

It localises to the cytoplasm. It catalyses the reaction D-glyceraldehyde 3-phosphate + phosphate + NAD(+) = (2R)-3-phospho-glyceroyl phosphate + NADH + H(+). It functions in the pathway carbohydrate degradation; glycolysis; pyruvate from D-glyceraldehyde 3-phosphate: step 1/5. Its function is as follows. Catalyzes the oxidative phosphorylation of glyceraldehyde 3-phosphate (G3P) to 1,3-bisphosphoglycerate (BPG) using the cofactor NAD. The first reaction step involves the formation of a hemiacetal intermediate between G3P and a cysteine residue, and this hemiacetal intermediate is then oxidized to a thioester, with concomitant reduction of NAD to NADH. The reduced NADH is then exchanged with the second NAD, and the thioester is attacked by a nucleophilic inorganic phosphate to produce BPG. The sequence is that of Glyceraldehyde-3-phosphate dehydrogenase (gap) from Streptococcus pyogenes serotype M1.